Consider the following 550-residue polypeptide: Eukaryotic translation initiation factor 3 subunit D-2 (550 aa).

Residues 97–126 (RGRGFRPSVHNNPRNVRNQRGRKGNAMGNI) are disordered. The tract at residues 287-301 (KFDMLTVNETSQEPP) is RNA gate. The disordered stretch occupies residues 530–550 (SDVSEEEESSEDKPFGLSMNN).

The protein belongs to the eIF-3 subunit D family. As to quaternary structure, component of the eukaryotic translation initiation factor 3 (eIF-3) complex. The eIF-3 complex interacts with pix.

The protein localises to the cytoplasm. Functionally, mRNA cap-binding component of the eukaryotic translation initiation factor 3 (eIF-3) complex, which is involved in protein synthesis of a specialized repertoire of mRNAs and, together with other initiation factors, stimulates binding of mRNA and methionyl-tRNAi to the 40S ribosome. The eIF-3 complex specifically targets and initiates translation of a subset of mRNAs involved in cell proliferation. In the eIF-3 complex, eif3d specifically recognizes and binds the 7-methylguanosine cap of a subset of mRNAs. In Drosophila willistoni (Fruit fly), this protein is Eukaryotic translation initiation factor 3 subunit D-2.